Reading from the N-terminus, the 241-residue chain is Biosynthetic peptidoglycan transglycosylase (241 aa).

The helical transmembrane segment at 18-38 (GVIGIIALWMAGILIFAFLPV) threads the bilayer.

It belongs to the glycosyltransferase 51 family.

It localises to the cell inner membrane. The enzyme catalyses [GlcNAc-(1-&gt;4)-Mur2Ac(oyl-L-Ala-gamma-D-Glu-L-Lys-D-Ala-D-Ala)](n)-di-trans,octa-cis-undecaprenyl diphosphate + beta-D-GlcNAc-(1-&gt;4)-Mur2Ac(oyl-L-Ala-gamma-D-Glu-L-Lys-D-Ala-D-Ala)-di-trans,octa-cis-undecaprenyl diphosphate = [GlcNAc-(1-&gt;4)-Mur2Ac(oyl-L-Ala-gamma-D-Glu-L-Lys-D-Ala-D-Ala)](n+1)-di-trans,octa-cis-undecaprenyl diphosphate + di-trans,octa-cis-undecaprenyl diphosphate + H(+). The protein operates within cell wall biogenesis; peptidoglycan biosynthesis. Functionally, peptidoglycan polymerase that catalyzes glycan chain elongation from lipid-linked precursors. This Yersinia pestis bv. Antiqua (strain Antiqua) protein is Biosynthetic peptidoglycan transglycosylase.